A 606-amino-acid polypeptide reads, in one-letter code: Probable glutamine--fructose-6-phosphate aminotransferase [isomerizing] (606 aa).

The active-site For GATase activity is the Cys-2. Residues 2–224 (CGISACLNHT…DNDYGYITNN (223 aa)) form the Glutamine amidotransferase type-2 domain. 2 SIS domains span residues 282–427 (FFPE…SLDN) and 458–596 (LLEF…PDYP).

The enzyme catalyses D-fructose 6-phosphate + L-glutamine = D-glucosamine 6-phosphate + L-glutamate. It participates in nucleotide-sugar biosynthesis; UDP-N-acetyl-alpha-D-glucosamine biosynthesis; alpha-D-glucosamine 6-phosphate from D-fructose 6-phosphate: step 1/1. Its function is as follows. Controls the flux of glucose into the hexosamine pathway. Most likely involved in regulating the availability of precursors for glycosylation of proteins (Potential). This is Probable glutamine--fructose-6-phosphate aminotransferase [isomerizing] from Acanthamoeba polyphaga (Amoeba).